The chain runs to 330 residues: MIVVTGAAGFIGSNLVRGLNRRGIQDIIAVDDLTEGDKFLNLVDCQIADYLDKDEFRRRVLAGSLPPLRAVLHQGACSDTTERNGRYMLDNNYRVTLELFEYCQAHAIPFLYASSAAVYGGSSVYVEDPTNERPLNVYGYSKLLFDQVLRTRMKSLTAQVVGLRYFNVYGPHEQHKGRMASVAFHNMNQFLAEGHVRLFAGWDGYADGGQSRDFISVEDVVAVNLHFLDNPGTSGIFNCGTGRAQPFNDVAAAVVNTLREERGEAALPLDKLVEQGLVRYIPFPDDLKGRYQSYTQADVTQLRAAGFAAPMRDVQTGVAEYVRYWRARKA.

NADP(+) is bound by residues 10 to 11 (FI), 31 to 32 (DD), lysine 38, lysine 53, 74 to 78 (QGACS), and asparagine 91. Tyrosine 138 (proton acceptor) is an active-site residue. Lysine 142 is a binding site for NADP(+). Asparagine 167 is a substrate binding site. Positions 168 and 176 each coordinate NADP(+). Lysine 176 acts as the Proton acceptor in catalysis. Substrate-binding positions include arginine 178, histidine 185, 199 to 202 (FAGW), arginine 212, and tyrosine 291.

It belongs to the NAD(P)-dependent epimerase/dehydratase family. HldD subfamily. As to quaternary structure, homopentamer. It depends on NADP(+) as a cofactor.

It carries out the reaction ADP-D-glycero-beta-D-manno-heptose = ADP-L-glycero-beta-D-manno-heptose. It participates in nucleotide-sugar biosynthesis; ADP-L-glycero-beta-D-manno-heptose biosynthesis; ADP-L-glycero-beta-D-manno-heptose from D-glycero-beta-D-manno-heptose 7-phosphate: step 4/4. Its function is as follows. Catalyzes the interconversion between ADP-D-glycero-beta-D-manno-heptose and ADP-L-glycero-beta-D-manno-heptose via an epimerization at carbon 6 of the heptose. The chain is ADP-L-glycero-D-manno-heptose-6-epimerase from Bordetella petrii (strain ATCC BAA-461 / DSM 12804 / CCUG 43448).